The chain runs to 340 residues: TATA-box-binding protein (340 aa).

The segment at 1 to 78 (MNLNSPAVSM…HSLQGSSMQM (78 aa)) is disordered. Over residues 57–68 (PQSIQPMQSQQM) the composition is skewed to low complexity. Residues 69 to 78 (HSLQGSSMQM) show a composition bias toward polar residues. A run of 2 repeats spans residues 168-244 (LQNI…ARIV) and 258-335 (VQNM…YPIL).

Belongs to the TBP family. In terms of assembly, component of the TFIID basal transcription factor complex, composed of TATA-box-binding protein tbp-1, and a number of TBP-associated factors (TAFs). Binds DNA as monomer.

It is found in the nucleus. The TFIID basal transcription factor complex plays a major role in the initiation of RNA polymerase II (Pol II)-dependent transcription. TFIID recognizes and binds promoters via its subunit tbp-1, a TATA-box-binding protein, and promotes assembly of the pre-initiation complex (PIC). The TFIID complex consists of tbp-1 and TBP-associated factors (TAFs). General transcription factor that functions at the core of the TFIID complex. In Caenorhabditis elegans, this protein is TATA-box-binding protein (tbp-1).